The chain runs to 443 residues: MQVSVETLEGLERKVTVSVPTEKVEEEVSSRLRNLARKVKIDGFRPGKVPFNVVKSRFSDSVREEVAREMVQSTLYEALQKNELVPAGYPHVEPLEIEPGKDFKYTAVFEVMPVFEIVELNQAPVELIRSEVTDKDVDNMIEKLREQNKEWHEVTHAVKKGDKVVIDFQGFLDDKPFQGGSAEGYELVIGSGSMIPGFEDGIVGGKIDKPFDIKVSFPEDYGHKDLAGKEATFKITIKKIMEGKLPALDEAFAEKFNIKEGGIESLKKDIRENMARELERRVNMMNREKLFDSLMSVNHVELPIALIDKEIEHLKHDMYHRLFGHEHKDDEKIPDFPRELFEEQAKRRVHLGLLFAEYVKKHEIVADNDKVNAMIDKFASAYESPDELRAWYQSSKEHMAEVEALVMEDMVADKIAEDAKLKYKNMDYDSVMNPKKGTEKKGE.

One can recognise a PPIase FKBP-type domain in the interval 161 to 246 (GDKVVIDFQG…IKKIMEGKLP (86 aa)).

It belongs to the FKBP-type PPIase family. Tig subfamily.

It localises to the cytoplasm. It catalyses the reaction [protein]-peptidylproline (omega=180) = [protein]-peptidylproline (omega=0). In terms of biological role, involved in protein export. Acts as a chaperone by maintaining the newly synthesized protein in an open conformation. Functions as a peptidyl-prolyl cis-trans isomerase. The protein is Trigger factor of Legionella pneumophila subsp. pneumophila (strain Philadelphia 1 / ATCC 33152 / DSM 7513).